The sequence spans 477 residues: Protoporphyrinogen oxidase (477 aa).

FAD-binding positions include 9-14, W42, 57-60, V257, A449, and 454-456; these read GGGISG, GPRG, and VAV.

The protein belongs to the protoporphyrinogen/coproporphyrinogen oxidase family. Protoporphyrinogen oxidase subfamily. In terms of assembly, monomer. Homodimer. It depends on FAD as a cofactor. In terms of tissue distribution, detected in liver (at protein level).

The protein localises to the mitochondrion inner membrane. It carries out the reaction protoporphyrinogen IX + 3 O2 = protoporphyrin IX + 3 H2O2. The protein operates within porphyrin-containing compound metabolism; protoporphyrin-IX biosynthesis; protoporphyrin-IX from protoporphyrinogen-IX: step 1/1. In terms of biological role, catalyzes the 6-electron oxidation of protoporphyrinogen-IX to form protoporphyrin-IX. This Bos taurus (Bovine) protein is Protoporphyrinogen oxidase (PPOX).